The primary structure comprises 408 residues: Na(+)-translocating NADH-quinone reductase subunit F (408 aa).

Residues 6 to 26 form a helical membrane-spanning segment; the sequence is IILGVVMFTAIVLALVAIILA. Residues 35–127 form the 2Fe-2S ferredoxin-type domain; the sequence is GDVTIRINGE…DMDVEVPEEV (93 aa). [2Fe-2S] cluster-binding residues include C70, C76, C79, and C111. In terms of domain architecture, FAD-binding FR-type spans 130 to 270; that stretch reads VKAWECTVES…YGPFGEFFAK (141 aa).

Belongs to the NqrF family. In terms of assembly, composed of six subunits; NqrA, NqrB, NqrC, NqrD, NqrE and NqrF. [2Fe-2S] cluster serves as cofactor. Requires FAD as cofactor.

The protein localises to the cell inner membrane. It carries out the reaction a ubiquinone + n Na(+)(in) + NADH + H(+) = a ubiquinol + n Na(+)(out) + NAD(+). Functionally, NQR complex catalyzes the reduction of ubiquinone-1 to ubiquinol by two successive reactions, coupled with the transport of Na(+) ions from the cytoplasm to the periplasm. The first step is catalyzed by NqrF, which accepts electrons from NADH and reduces ubiquinone-1 to ubisemiquinone by a one-electron transfer pathway. The polypeptide is Na(+)-translocating NADH-quinone reductase subunit F (Marinomonas sp. (strain MWYL1)).